We begin with the raw amino-acid sequence, 235 residues long: Proteasome subunit alpha type-2 (235 aa).

The protein belongs to the peptidase T1A family. The 26S proteasome consists of a 20S proteasome core and two 19S regulatory subunits. The 20S proteasome core is composed of 28 subunits that are arranged in four stacked rings, resulting in a barrel-shaped structure. The two end rings are each formed by seven alpha subunits, and the two central rings are each formed by seven beta subunits. The catalytic chamber with the active sites is on the inside of the barrel.

The protein resides in the cytoplasm. It is found in the nucleus. In terms of biological role, the proteasome is a multicatalytic proteinase complex which is characterized by its ability to cleave peptides with Arg, Phe, Tyr, Leu, and Glu adjacent to the leaving group at neutral or slightly basic pH. The proteasome has an ATP-dependent proteolytic activity. In Oryza sativa subsp. indica (Rice), this protein is Proteasome subunit alpha type-2 (PAB1).